The following is a 178-amino-acid chain: Protein GrpE (178 aa).

Residues 1-11 show a composition bias toward basic and acidic residues; that stretch reads MAEDQAPREET. A disordered region spans residues 1-30; that stretch reads MAEDQAPREETVEAPELTEAPEIDELETLR.

This sequence belongs to the GrpE family. As to quaternary structure, homodimer.

The protein resides in the cytoplasm. Functionally, participates actively in the response to hyperosmotic and heat shock by preventing the aggregation of stress-denatured proteins, in association with DnaK and GrpE. It is the nucleotide exchange factor for DnaK and may function as a thermosensor. Unfolded proteins bind initially to DnaJ; upon interaction with the DnaJ-bound protein, DnaK hydrolyzes its bound ATP, resulting in the formation of a stable complex. GrpE releases ADP from DnaK; ATP binding to DnaK triggers the release of the substrate protein, thus completing the reaction cycle. Several rounds of ATP-dependent interactions between DnaJ, DnaK and GrpE are required for fully efficient folding. In Cereibacter sphaeroides (strain ATCC 17023 / DSM 158 / JCM 6121 / CCUG 31486 / LMG 2827 / NBRC 12203 / NCIMB 8253 / ATH 2.4.1.) (Rhodobacter sphaeroides), this protein is Protein GrpE.